The primary structure comprises 272 residues: Golgi to ER traffic protein 5 (272 aa).

2 disordered regions span residues 1 to 35 and 85 to 105; these read MSTV…HSGT and LHAP…PGSS. Residues 108–198 enclose the Ubiquitin-like domain; it reads ITVHLKSARN…VEFGVMIIGG (91 aa). The segment at 212-231 is disordered; that stretch reads SAEQKESYEPPKPAVGPSGE.

It belongs to the GET5 family. In terms of assembly, forms homodimers via its C-terminal domain. Component of the get4/get5/sgt2 sorting complex. Binds directly sgt12 homodimers.

It is found in the cytoplasm. Component of the get4/get5/sgt2 sorting complex involved in the GET (guided entry of TA proteins) pathway that leads to the insertion of tail-anchored (TA) proteins into the endoplasmic reticulum. Get4 and get5 form an obligate complex that catalyzes the transfer of tail-anchored proteins destined to the endoplasmic reticulum from sgt2 to the cytosolic targeting factor which then targets the TA protein to the ER membrane via get1/get2. In Aspergillus fumigatus (strain ATCC MYA-4609 / CBS 101355 / FGSC A1100 / Af293) (Neosartorya fumigata), this protein is Golgi to ER traffic protein 5.